A 279-amino-acid polypeptide reads, in one-letter code: Putative pyruvate, phosphate dikinase regulatory protein (279 aa).

Residue 153-160 participates in ADP binding; sequence GVSRTSKT.

This sequence belongs to the pyruvate, phosphate/water dikinase regulatory protein family. PDRP subfamily.

The catalysed reaction is N(tele)-phospho-L-histidyl/L-threonyl-[pyruvate, phosphate dikinase] + ADP = N(tele)-phospho-L-histidyl/O-phospho-L-threonyl-[pyruvate, phosphate dikinase] + AMP + H(+). The enzyme catalyses N(tele)-phospho-L-histidyl/O-phospho-L-threonyl-[pyruvate, phosphate dikinase] + phosphate + H(+) = N(tele)-phospho-L-histidyl/L-threonyl-[pyruvate, phosphate dikinase] + diphosphate. In terms of biological role, bifunctional serine/threonine kinase and phosphorylase involved in the regulation of the pyruvate, phosphate dikinase (PPDK) by catalyzing its phosphorylation/dephosphorylation. The chain is Putative pyruvate, phosphate dikinase regulatory protein from Rhodopseudomonas palustris (strain ATCC BAA-98 / CGA009).